The primary structure comprises 147 residues: 3-dehydroquinate dehydratase (147 aa).

Tyr-24 (proton acceptor) is an active-site residue. 3 residues coordinate substrate: Asn-74, His-80, and Asp-87. The Proton donor role is filled by His-100. Substrate-binding positions include Leu-101–Ser-102 and Arg-111.

The protein belongs to the type-II 3-dehydroquinase family. Homododecamer.

It carries out the reaction 3-dehydroquinate = 3-dehydroshikimate + H2O. The protein operates within metabolic intermediate biosynthesis; chorismate biosynthesis; chorismate from D-erythrose 4-phosphate and phosphoenolpyruvate: step 3/7. In terms of biological role, catalyzes a trans-dehydration via an enolate intermediate. In Azorhizobium caulinodans (strain ATCC 43989 / DSM 5975 / JCM 20966 / LMG 6465 / NBRC 14845 / NCIMB 13405 / ORS 571), this protein is 3-dehydroquinate dehydratase.